The primary structure comprises 284 residues: Phosphatidylserine decarboxylase proenzyme (284 aa).

Active-site charge relay system; for autoendoproteolytic cleavage activity residues include aspartate 88, histidine 145, and serine 248. The Schiff-base intermediate with substrate; via pyruvic acid; for decarboxylase activity role is filled by serine 248. Serine 248 is subject to Pyruvic acid (Ser); by autocatalysis.

Belongs to the phosphatidylserine decarboxylase family. PSD-B subfamily. Prokaryotic type I sub-subfamily. In terms of assembly, heterodimer of a large membrane-associated beta subunit and a small pyruvoyl-containing alpha subunit. Pyruvate is required as a cofactor. Is synthesized initially as an inactive proenzyme. Formation of the active enzyme involves a self-maturation process in which the active site pyruvoyl group is generated from an internal serine residue via an autocatalytic post-translational modification. Two non-identical subunits are generated from the proenzyme in this reaction, and the pyruvate is formed at the N-terminus of the alpha chain, which is derived from the carboxyl end of the proenzyme. The autoendoproteolytic cleavage occurs by a canonical serine protease mechanism, in which the side chain hydroxyl group of the serine supplies its oxygen atom to form the C-terminus of the beta chain, while the remainder of the serine residue undergoes an oxidative deamination to produce ammonia and the pyruvoyl prosthetic group on the alpha chain. During this reaction, the Ser that is part of the protease active site of the proenzyme becomes the pyruvoyl prosthetic group, which constitutes an essential element of the active site of the mature decarboxylase.

Its subcellular location is the cell membrane. It carries out the reaction a 1,2-diacyl-sn-glycero-3-phospho-L-serine + H(+) = a 1,2-diacyl-sn-glycero-3-phosphoethanolamine + CO2. Its pathway is phospholipid metabolism; phosphatidylethanolamine biosynthesis; phosphatidylethanolamine from CDP-diacylglycerol: step 2/2. Its function is as follows. Catalyzes the formation of phosphatidylethanolamine (PtdEtn) from phosphatidylserine (PtdSer). The protein is Phosphatidylserine decarboxylase proenzyme of Albidiferax ferrireducens (strain ATCC BAA-621 / DSM 15236 / T118) (Rhodoferax ferrireducens).